Consider the following 267-residue polypeptide: tRNA pseudouridine synthase A (267 aa).

Asp-51 serves as the catalytic Nucleophile. Tyr-109 is a substrate binding site.

It belongs to the tRNA pseudouridine synthase TruA family.

The enzyme catalyses uridine(38/39/40) in tRNA = pseudouridine(38/39/40) in tRNA. Functionally, formation of pseudouridine at positions 38, 39 and 40 in the anticodon stem and loop of transfer RNAs. This chain is tRNA pseudouridine synthase A, found in Methanothrix thermoacetophila (strain DSM 6194 / JCM 14653 / NBRC 101360 / PT) (Methanosaeta thermophila).